We begin with the raw amino-acid sequence, 489 residues long: Mitochondrial-processing peptidase subunit beta (489 aa).

The N-terminal 45 residues, 1–45 (MAAAALSRTLLPEARRRLWGFTRRLPLRRAAAQPLYFGGDRLRST), are a transit peptide targeting the mitochondrion. Histidine 101 lines the Zn(2+) pocket. The Proton acceptor role is filled by glutamate 104. Positions 105 and 181 each coordinate Zn(2+).

Belongs to the peptidase M16 family. In terms of assembly, heterodimer of PMPCA (alpha) and PMPCB (beta) subunits, forming the mitochondrial processing protease (MPP) in which PMPCA is involved in substrate recognition and binding and PMPCB is the catalytic subunit. Requires Zn(2+) as cofactor.

It localises to the mitochondrion matrix. The enzyme catalyses Release of N-terminal transit peptides from precursor proteins imported into the mitochondrion, typically with Arg in position P2.. With respect to regulation, binding to PMPCA is required for catalytic activity. Its function is as follows. Catalytic subunit of the essential mitochondrial processing protease (MPP), which cleaves the mitochondrial sequence off newly imported precursors proteins. Preferentially, cleaves after an arginine at position P2. Required for PINK1 turnover by coupling PINK1 mitochondrial import and cleavage, which results in subsequent PINK1 proteolysis. The polypeptide is Mitochondrial-processing peptidase subunit beta (Pmpcb) (Mus musculus (Mouse)).